The primary structure comprises 759 residues: Olfactomedin-like protein 2B (759 aa).

The first 20 residues, Met-1 to Gly-20, serve as a signal peptide directing secretion. Coiled-coil stretches lie at residues Thr-40–Ala-68 and Lys-179–Arg-209. N-linked (GlcNAc...) asparagine glycosylation is found at Asn-187 and Asn-213. Disordered stretches follow at residues Thr-346 to Ser-396 and Thr-456 to Asp-494. Positions Ala-356–Ser-396 are enriched in low complexity. The 258-residue stretch at Arg-502–Tyr-759 folds into the Olfactomedin-like domain. Cys-503 and Cys-689 are disulfide-bonded. A glycan (N-linked (GlcNAc...) asparagine) is linked at Asn-704.

In terms of assembly, homodimer. Binds to heparin and chondroitin sulfate E. O-glycosylated and N-glycosylated.

Its subcellular location is the secreted. This chain is Olfactomedin-like protein 2B (OLFML2B), found in Bos taurus (Bovine).